Consider the following 99-residue polypeptide: Nucleoid-associated protein SUB1611 (99 aa).

The protein belongs to the YbaB/EbfC family. In terms of assembly, homodimer.

The protein localises to the cytoplasm. Its subcellular location is the nucleoid. Binds to DNA and alters its conformation. May be involved in regulation of gene expression, nucleoid organization and DNA protection. This chain is Nucleoid-associated protein SUB1611, found in Streptococcus uberis (strain ATCC BAA-854 / 0140J).